Reading from the N-terminus, the 280-residue chain is 4-deoxy-L-threo-5-hexosulose-uronate ketol-isomerase (280 aa).

Positions 198, 200, 205, and 247 each coordinate Zn(2+).

Belongs to the KduI family. Requires Zn(2+) as cofactor.

It carries out the reaction 5-dehydro-4-deoxy-D-glucuronate = 3-deoxy-D-glycero-2,5-hexodiulosonate. It functions in the pathway glycan metabolism; pectin degradation; 2-dehydro-3-deoxy-D-gluconate from pectin: step 4/5. Its function is as follows. Catalyzes the isomerization of 5-dehydro-4-deoxy-D-glucuronate to 3-deoxy-D-glycero-2,5-hexodiulosonate. This Bacteroides fragilis (strain ATCC 25285 / DSM 2151 / CCUG 4856 / JCM 11019 / LMG 10263 / NCTC 9343 / Onslow / VPI 2553 / EN-2) protein is 4-deoxy-L-threo-5-hexosulose-uronate ketol-isomerase.